The sequence spans 317 residues: Large ribosomal subunit protein uL10 (317 aa).

Over residues 280–290 (SASAAPAAGGA) the composition is skewed to low complexity. Positions 280-317 (SASAAPAAGGATEKKEEAKKPESESEEEDDDMGFGLFD) are disordered. Residues 291–302 (TEKKEEAKKPES) show a composition bias toward basic and acidic residues. Position 302 is a phosphoserine (serine 302). Residue serine 304 is modified to Phosphoserine; by CK1.

It belongs to the universal ribosomal protein uL10 family. In terms of assembly, P0 forms a pentameric complex by interaction with dimers of P1 and P2.

The protein resides in the cytoplasm. The protein localises to the nucleus. Functionally, ribosomal protein P0 is the functional equivalent of E.coli protein L10. The sequence is that of Large ribosomal subunit protein uL10 (RpLP0) from Drosophila melanogaster (Fruit fly).